A 397-amino-acid chain; its full sequence is DNA excision repair protein ERCC-8 (397 aa).

5 WD repeats span residues 41–81 (IHCS…RQPY), 97–137 (VHKY…IADV), 184–224 (GHRQ…GCLI), 243–282 (AHNG…NTLV), and 332–371 (GHYK…SVPD). The disordered stretch occupies residues 370 to 397 (PDDDDETSTRSQLNPAFEDAWSSSDEEG). Residues S391, S392, and S393 each carry the phosphoserine modification.

In terms of assembly, part of the CSA complex (also named DCX(ERCC8) complex), a DCX E3 ubiquitin-protein ligase complex containing ERCC8, RBX1, DDB1 and CUL4A; the CSA complex interacts with RNA polymerase II; upon UV irradiation it interacts with the COP9 signalosome and preferentially with the hyperphosphorylated form of RNA polymerase II. Interacts with ERCC6/CSB (via CIM motif); promoting recruitment to lesion-stalled RNA polymerase II (Pol II). Interacts with KIAA1530/UVSSA. Interacts with a subunit of RNA polymerase II TFIIH.

The protein localises to the nucleus. It localises to the chromosome. It is found in the nucleus matrix. It functions in the pathway protein modification; protein ubiquitination. In terms of biological role, substrate-recognition component of the CSA complex, a DCX (DDB1-CUL4-X-box) E3 ubiquitin-protein ligase complex, involved in transcription-coupled nucleotide excision repair (TC-NER), a process during which RNA polymerase II-blocking lesions are rapidly removed from the transcribed strand of active genes. Following recruitment to lesion-stalled RNA polymerase II (Pol II), the CSA complex mediates ubiquitination of Pol II subunit POLR2A/RPB1 at 'Lys-1268', a critical TC-NER checkpoint, governing RNA Pol II stability and initiating DNA damage excision by TFIIH recruitment. The CSA complex also promotes the ubiquitination and subsequent proteasomal degradation of ERCC6/CSB in a UV-dependent manner; ERCC6 degradation is essential for the recovery of RNA synthesis after transcription-coupled repair. Also plays a role in DNA double-strand breaks (DSSBs) repair by non-homologous end joining (NHEJ). This chain is DNA excision repair protein ERCC-8 (ERCC8), found in Bos taurus (Bovine).